The following is a 511-amino-acid chain: Lysine--tRNA ligase (511 aa).

E403 and E410 together coordinate Mg(2+).

The protein belongs to the class-II aminoacyl-tRNA synthetase family. As to quaternary structure, homodimer. Mg(2+) serves as cofactor.

It localises to the cytoplasm. The enzyme catalyses tRNA(Lys) + L-lysine + ATP = L-lysyl-tRNA(Lys) + AMP + diphosphate. In Onion yellows phytoplasma (strain OY-M), this protein is Lysine--tRNA ligase.